Here is a 253-residue protein sequence, read N- to C-terminus: 3-isopropylmalate dehydratase small subunit 3 (253 aa).

The transit peptide at Met-1–Arg-56 directs the protein to the chloroplast.

This sequence belongs to the LeuD family. As to quaternary structure, heterodimer of the large LEUC/IIL1 subunit and the small LEUD (SSU1, SSU2 or SSU3) subunits. In terms of tissue distribution, expressed in vascular bundles of roots, cotyledons and rosette leaves. Expressed in stem vascular bundles which branche off into lateral inflorescences. Expressed in connective tissues in anthers. In hypocotyls, expressed in parenchyma cells surrounding the vasculature. In rosette leaves, expressed in phloem cells and cells close to the xylem along the vascular bundles. In roots of adult plants, expressed in cells closely associated with the stele. In flowering stalks, expressed in parenchyma cells associated with the phloem or the xylem.

It localises to the plastid. The protein resides in the chloroplast stroma. The enzyme catalyses (2R,3S)-3-isopropylmalate = (2S)-2-isopropylmalate. The catalysed reaction is a 2-(omega-methylsulfanyl)alkylmalate = a 2-(omega-methylsulfanyl)alkylmaleate + H2O. It catalyses the reaction 2-(3-methylsulfanyl)propylmalate = 2-(2-methylsulfanyl)propylmaleate + H2O. It carries out the reaction a 3-(omega-methylsulfanyl)alkylmalate = a 2-(omega-methylsulfanyl)alkylmaleate + H2O. The enzyme catalyses 2-(2-methylsulfanyl)ethylmalate = 2-(2-methylsulfanyl)ethylmaleate + H2O. The catalysed reaction is 3-(2-methylsulfanyl)ethylmalate = 2-(2-methylsulfanyl)ethylmaleate + H2O. It catalyses the reaction 3-(3-methylsulfanyl)propylmalate = 2-(2-methylsulfanyl)propylmaleate + H2O. It functions in the pathway amino-acid biosynthesis; L-leucine biosynthesis; L-leucine from 3-methyl-2-oxobutanoate: step 2/4. In terms of biological role, catalyzes the isomerization between 2-isopropylmalate and 3-isopropylmalate, via the formation of 2-isopropylmaleate. Functions redundantly with LEUD1 in the methionine chain elongation pathway of aliphatic glucosinolate formation. This is 3-isopropylmalate dehydratase small subunit 3 from Arabidopsis thaliana (Mouse-ear cress).